Reading from the N-terminus, the 180-residue chain is Large ribosomal subunit protein uL6 (180 aa).

It belongs to the universal ribosomal protein uL6 family. As to quaternary structure, part of the 50S ribosomal subunit.

This protein binds to the 23S rRNA, and is important in its secondary structure. It is located near the subunit interface in the base of the L7/L12 stalk, and near the tRNA binding site of the peptidyltransferase center. This chain is Large ribosomal subunit protein uL6, found in Thermus aquaticus.